The chain runs to 63 residues: Bucandin (63 aa).

Cystine bridges form between C3–C24, C6–C11, C17–C39, C43–C55, and C56–C61.

Expressed by the venom gland.

The protein resides in the secreted. In terms of biological role, this toxin is described as enhancing presynaptic acetylcholine release, but neither experimental results, nor references to other sources are available. The polypeptide is Bucandin (Bungarus candidus (Malayan krait)).